The following is a 132-amino-acid chain: Fluoride-specific ion channel FluC 1 (132 aa).

Helical transmembrane passes span 11–31, 37–57, 70–92, and 105–125; these read AVFA…ALAI, WPWP…YFTT, RPLL…VETI, and AYSV…TVLV. Residues G79 and T82 each coordinate Na(+).

Belongs to the fluoride channel Fluc/FEX (TC 1.A.43) family.

The protein localises to the cell membrane. The enzyme catalyses fluoride(in) = fluoride(out). With respect to regulation, na(+) is not transported, but it plays an essential structural role and its presence is essential for fluoride channel function. Fluoride-specific ion channel. Important for reducing fluoride concentration in the cell, thus reducing its toxicity. The polypeptide is Fluoride-specific ion channel FluC 1 (Mycobacterium bovis (strain ATCC BAA-935 / AF2122/97)).